Here is a 176-residue protein sequence, read N- to C-terminus: MAANLRNNAFLSSLMFLLLIGSSYAITSSEMSTICDKTLNPSFCLKFLNTKFASPNLQALAKTTLDSTQARATQTLKKLQSIIDGGVDPRSKLAYRSCVDEYESAIGNLEEAFEHLASGDGMGMNMKVSAALDGADTCLDDVKRLRSVDSSVVNNSKTIKNLCGIALVISNMLPRN.

The signal sequence occupies residues 1–25; it reads MAANLRNNAFLSSLMFLLLIGSSYA. Cystine bridges form between C35-C44 and C98-C138. N154 is a glycosylation site (N-linked (GlcNAc...) asparagine).

The protein belongs to the PMEI family. As to quaternary structure, monomer and homodimer. Interacts in vitro with PPME1. In terms of tissue distribution, highest expression in flowers. Expressed exclusively at the pollen tube tip.

It localises to the secreted. Its subcellular location is the extracellular space. The protein resides in the apoplast. Inhibits pectin methylesterase (PME) from flowers and siliques. Inhibits PME from leaves. The protein is Pectinesterase inhibitor 1 of Arabidopsis thaliana (Mouse-ear cress).